The following is a 433-amino-acid chain: Casein kinase 1-like protein 5 (433 aa).

Positions 9-278 (FRLGRKIGSG…LKRLFRNLFI (270 aa)) constitute a Protein kinase domain. ATP-binding positions include 15–23 (IGSGSFGEI) and K38. Residue D128 is the Proton acceptor of the active site. Residues 297 to 433 (QSQSGNPQPR…DDVEPQSKAL (137 aa)) are disordered. The segment covering 342–359 (LKQKDKNGNDSAIAKDKL) has biased composition (basic and acidic residues). A compositionally biased stretch (low complexity) spans 362-375 (GSLNLGRSEGSSSR). A Phosphoserine modification is found at S390. Over residues 407–423 (INNNAGDETAATPQSNG) the composition is skewed to polar residues.

It belongs to the protein kinase superfamily. CK1 Ser/Thr protein kinase family. Casein kinase I subfamily. Monomer. Post-translationally, autophosphorylated.

The protein resides in the cytoplasm. The enzyme catalyses L-seryl-[protein] + ATP = O-phospho-L-seryl-[protein] + ADP + H(+). The catalysed reaction is L-threonyl-[protein] + ATP = O-phospho-L-threonyl-[protein] + ADP + H(+). In terms of biological role, casein kinases are operationally defined by their preferential utilization of acidic proteins such as caseins as substrates. It can phosphorylate a large number of proteins. The sequence is that of Casein kinase 1-like protein 5 from Arabidopsis thaliana (Mouse-ear cress).